The chain runs to 510 residues: NAD(P)H-quinone oxidoreductase subunit 2, chloroplastic (510 aa).

The next 12 membrane-spanning stretches (helical) occupy residues 24-44 (LLLF…GLIL), 59-79 (WFYF…LFRW), 99-119 (IFQF…VEYI), 124-144 (MAIT…MFLC), 149-169 (LITI…LSGY), 183-203 (YLLM…WLYG), 229-249 (ISIA…PAPF), 295-315 (WHLL…LIAI), 323-343 (MLAY…IVGD), 354-374 (YMLF…LFGL), 395-415 (ALSS…AGFF), and 418-438 (LHLF…IGLL).

Belongs to the complex I subunit 2 family. NDH is composed of at least 16 different subunits, 5 of which are encoded in the nucleus.

It is found in the plastid. The protein resides in the chloroplast thylakoid membrane. The enzyme catalyses a plastoquinone + NADH + (n+1) H(+)(in) = a plastoquinol + NAD(+) + n H(+)(out). The catalysed reaction is a plastoquinone + NADPH + (n+1) H(+)(in) = a plastoquinol + NADP(+) + n H(+)(out). Its function is as follows. NDH shuttles electrons from NAD(P)H:plastoquinone, via FMN and iron-sulfur (Fe-S) centers, to quinones in the photosynthetic chain and possibly in a chloroplast respiratory chain. The immediate electron acceptor for the enzyme in this species is believed to be plastoquinone. Couples the redox reaction to proton translocation, and thus conserves the redox energy in a proton gradient. This is NAD(P)H-quinone oxidoreductase subunit 2, chloroplastic from Ensete ventricosum (Abyssinian banana).